The sequence spans 400 residues: GTPase Obg (400 aa).

One can recognise an Obg domain in the interval 1–159 (MRFVDEAVIT…REIRLELKVL (159 aa)). The 174-residue stretch at 160–333 (ADVGLLGMPN…VVYYLMDQIE (174 aa)) folds into the OBG-type G domain. Residues 166-173 (GMPNAGKS), 191-195 (FTTMV), 213-216 (DIPG), 283-286 (NKLD), and 314-316 (SGL) contribute to the GTP site. S173 and T193 together coordinate Mg(2+).

Belongs to the TRAFAC class OBG-HflX-like GTPase superfamily. OBG GTPase family. As to quaternary structure, monomer. Requires Mg(2+) as cofactor.

It is found in the cytoplasm. Functionally, an essential GTPase which binds GTP, GDP and possibly (p)ppGpp with moderate affinity, with high nucleotide exchange rates and a fairly low GTP hydrolysis rate. Plays a role in control of the cell cycle, stress response, ribosome biogenesis and in those bacteria that undergo differentiation, in morphogenesis control. This chain is GTPase Obg, found in Acinetobacter baylyi (strain ATCC 33305 / BD413 / ADP1).